We begin with the raw amino-acid sequence, 557 residues long: Jerky protein (557 aa).

One can recognise an HTH psq-type domain in the interval 11–62 (KGEKRKRVVLTLKEKIDICTRLERGESRKALMQEYNVGMSTLYDIKAHKAQL). 2 DNA-binding regions (H-T-H motif) span residues 38 to 58 (RKALMQEYNVGMSTLYDIKAH) and 110 to 142 (PMLIEKAKDFYKQMRLTEPCVFSGGWLWRFKAR). Positions 77 to 149 (QRRTLHTPKL…KARHGIKKLD (73 aa)) constitute an HTH CENPB-type domain. The DDE-1 domain occupies 213–382 (KDRLTVLMCA…VPSQVFQRAW (170 aa)).

This sequence belongs to the tigger transposable element derived protein family. In terms of tissue distribution, brain; highest in the temporal and brainstem regions.

The protein localises to the nucleus. In terms of biological role, may bind DNA. This is Jerky protein from Mus musculus (Mouse).